We begin with the raw amino-acid sequence, 418 residues long: Hydroxysteroid dehydrogenase-like protein 2 (418 aa).

NADP(+) contacts are provided by residues 17–23 (GASRGIG), K42, and D74. K42 carries the N6-(2-hydroxyisobutyryl)lysine modification. An N6-acetyllysine modification is found at K116. Y168 acts as the Proton acceptor in catalysis. Residue K172 coordinates NADP(+). Residues 306-415 (RSGAVEETFR…KLEKLMNQMN (110 aa)) form the SCP2 domain. K318 is subject to N6-succinyllysine.

Belongs to the short-chain dehydrogenases/reductases (SDR) family.

The protein localises to the peroxisome. It is found in the mitochondrion. Its function is as follows. Has apparently no steroid dehydrogenase activity. Controls bile acid (BA) and lipid metabolism in response to nutritional cues. In Bos taurus (Bovine), this protein is Hydroxysteroid dehydrogenase-like protein 2 (HSDL2).